The chain runs to 718 residues: MASSAAQIHILGGIGFPTSSSSSSTKNLDNKTNSIPRSVFFGNRTSPFTTPTSAFLRMGRRNNNASRYTVGPVRVVNEKVVGIDLGTTNSAVAAMEGGKPTIVTNAEGQRTTPSVVAYTKSKDRLVGQIAKRQAVVNPENTFFSVKRFIGRRMNEVAEESKQVSYRVIKDENGNVKLDCPAIGKQFAAEEISAQVLRKLVDDASRFLNDKVTKAVITVPAYFNDSQRTATKDAGRIAGLEVLRIINEPTAASLAYGFERKSNETILVFDLGGGTFDVSVLEVGDGVFEVLSTSGDTHLGGDDFDKRVVDWLASTFKKDEGIDLLKDKQALQRLTEAAEKAKIELSSLTQTNMSLPFITATADGPKHIETTLTRGKFEELCSDLLDRVRTPVENSLRDAKLSFKDIDEVILVGGSTRIPAVQDLVRKLTGKEPNVSVNPDEVVALGAAVQAGVLSGDVSDIVLLDVTPLSLGLETLGGVMTKIIPRNTTLPTSKSEVFSTAADGQTSVEINVLQGEREFVRDNKSIGSFRLDGIPPAPRGVPQIEVKFDIDANGILSVSASDKGTGKKQDITITGASTLPKDEVDTMVQEAERFAKEDKEKRDAIDTKNQADSVVYQTEKQLKELGEKIPGPVKEKVEAKLQELKEKIASGSTQEIKDTMAALNQEVMQIGQSLYNQPQPGGADSPPGGEASSSSDTSSSAKGGDNGGDVIDADFTDSN.

Residues 1-92 (MASSAAQIHI…IDLGTTNSAV (92 aa)) constitute a chloroplast transit peptide. A compositionally biased stretch (polar residues) spans 668–678 (QIGQSLYNQPQ). Positions 668 to 718 (QIGQSLYNQPQPGGADSPPGGEASSSSDTSSSAKGGDNGGDVIDADFTDSN) are disordered.

It belongs to the heat shock protein 70 (TC 1.A.33) family. DnaK subfamily.

The protein localises to the plastid. Its subcellular location is the chloroplast stroma. Acts redundantly with HSP70-6 in the thermotolerance of germinating seeds. Plays an important role in the protein precursor import into chloroplasts. In terms of biological role, in cooperation with other chaperones, Hsp70s are key components that facilitate folding of de novo synthesized proteins, assist translocation of precursor proteins into organelles, and are responsible for degradation of damaged protein under stress conditions. This chain is Heat shock 70 kDa protein 7, chloroplastic (HSP70-7), found in Arabidopsis thaliana (Mouse-ear cress).